A 1891-amino-acid chain; its full sequence is TATA-binding protein-associated factor mot1 (1891 aa).

The HEAT 1 repeat unit spans residues 30 to 68 (PDELFNLLGRILPYLRSKSWDTRAAAAKAIGLIVANADT). Disordered regions lie at residues 184–216 (FVAS…LSKR), 241–283 (LSSR…LDRS), and 295–316 (FKGA…EGPN). Over residues 264–275 (ENGEERNGDSKP) the composition is skewed to basic and acidic residues. HEAT repeat units follow at residues 473–511 (SKLM…EFVK) and 569–606 (SSFG…LEGE). Residues 699–710 (SAAAPARSSPAS) are compositionally biased toward low complexity. The tract at residues 699-740 (SAAAPARSSPASNTPEGTKGRRRKSEKKEAPPPSAHNVDGHM) is disordered. 4 HEAT repeats span residues 957–996 (PKKP…YYTT), 1139–1177 (YPWV…VITV), 1181–1216 (TMLV…VMED), and 1219–1257 (LPYV…LVPL). In terms of domain architecture, Helicase ATP-binding spans 1316–1489 (AFLNRYNLHG…WSLFDFLMPG (174 aa)). 1329-1336 (DDMGLGKT) contacts ATP. The DEAH box signature appears at 1440 to 1443 (DEGH). An HEAT 8 repeat occupies 1526-1565 (EALHKQVLPFLLRRLKEEVLNDLPPKIIQNYYCDPSELQR). Residues 1663-1813 (DLSGASYVSP…STVVNQQNAG (151 aa)) enclose the Helicase C-terminal domain.

This sequence belongs to the SNF2/RAD54 helicase family. As to quaternary structure, forms the NCT transcriptional regulatory complex with nctA and nctB.

The protein localises to the nucleus. Regulates transcription in association with TATA binding protein (TBP). Removes TBP from the TATA box via its C-terminal ATPase activity. Both transcription activation and repression require its ATPase activity. Part of the NCT transcriptional regulatory complex that acts as a key regulator of ergosterol biosynthesis and the azole exporter cdr1B. The NCT complex binds the promoters of genes linked to azole susceptibility, and especially represses the expression of cdr1B transporter. The protein is TATA-binding protein-associated factor mot1 of Aspergillus fumigatus (strain ATCC MYA-4609 / CBS 101355 / FGSC A1100 / Af293) (Neosartorya fumigata).